The sequence spans 487 residues: Probable glutamate receptor (487 aa).

Residues 1-23 form the signal peptide; the sequence is MDKGQHFVFFVLTTVLLLRESSH. Topologically, residues 24 to 169 are extracellular; the sequence is AGAMRNDAAA…FFHFLAPFSK (146 aa). Asparagine 104 carries N-linked (GlcNAc...) asparagine glycosylation. The helical transmembrane segment at 170–190 threads the bilayer; that stretch reads ETWTGLLFAYILTCFCLFLVA. Residues 191–235 are Cytoplasmic-facing; the sequence is RLSPCEWNEPKNEENHFTFLNSLWFGAGALALQGVTPRPKALSVR. A helical membrane pass occupies residues 236–256; sequence VIAAIWWLFTIALLAAYIANF. The Extracellular portion of the chain corresponds to 257 to 419; the sequence is TALLSSGSEQ…ERWSPLQPQA (163 aa). Residues 420–440 form a helical membrane-spanning segment; sequence LGGLFLTLAIGLALGVIAAVV. Residues 441–487 lie on the Cytoplasmic side of the membrane; that stretch reads ELSNKSRHAAGHVKKSCCSIFTEEMCTRLRIKENTRQSQETSGRANA.

This sequence belongs to the glutamate-gated ion channel (TC 1.A.10.1) family.

The protein localises to the cell membrane. The protein resides in the postsynaptic cell membrane. Its function is as follows. Receptor for glutamate. L-glutamate acts as an excitatory neurotransmitter at many synapses in the central nervous system. The postsynaptic actions of Glu are mediated by a variety of receptors that are named according to their selective agonists. This Anas platyrhynchos (Mallard) protein is Probable glutamate receptor (KBP).